A 689-amino-acid chain; its full sequence is Ribonuclease J (689 aa).

The tract at residues 1–88 (MTDNNQNNEN…RNYAQEELDS (88 aa)) is disordered. The span at 9–24 (ENHENSSENSKADEMR) shows a compositional bias: basic and acidic residues. Residues 56 to 78 (HHKKEHRPNKKPNNHHKQKHAKT) show a composition bias toward basic residues. An N6-acetyllysine mark is found at K132 and K138. Residues H206, H208, D210, H211, H275, and D297 each coordinate Zn(2+). 3 positions are modified to N6-acetyllysine: K321, K335, and K395. Substrate is bound at residue 498–502 (HVSGH). The residue at position 509 (K509) is an N6-acetyllysine. Residue H524 participates in Zn(2+) binding. An N6-acetyllysine mark is found at K545, K632, and K647.

This sequence belongs to the metallo-beta-lactamase superfamily. RNA-metabolizing metallo-beta-lactamase-like family. Bacterial RNase J subfamily. As to quaternary structure, homodimer. Homotetramer; dimer of homodimers. Interacts with RNA helicase RhpA, might be a member of a minimal RNA degradosome complex. The cofactor is Zn(2+). Acetylated on nine lysine residues. Some of the residues are acetylated by multiple different mechanisms. RimL is partially responsible for the acetylation of Lys-321, Lys-395 and Lys-647. HPB8_1270 homolog is partially responsible for the acetylation of Lys-321, Lys-395, Lys-509 and Lys-647. Acetyl-phosphate-mediated non-enzymatic acetylation pathway takes part in the acetylation of Lys-132, Lys-321, Lys-395, Lys-509 and Lys-647. Acetylation of the remaining residues Lys-138, Lys-335, Lys-545 and Lys-632 occurs by a yet undetermined mechanism. Acetylation on a number of these residues is important for growth regulation and proper cell morphology.

The protein resides in the cytoplasm. Catalytic activity is regulated by the balance between homodimers and homotetramers, with homotetramers being the active forms of this enzyme. Acetylation allosterically regulates the homooligomerization state and hence the catalytic activity. An RNase that has 5'-3' exoribonuclease and endoribonuclease activity. Degrades 5'-monophosphorylated ssRNA and dsRNA, considerably more active on ssRNA. Association with RhpA significantly increases the dsRNase activity. Degrades RNA substrate with hairpin structures at both ends with low activity, but presence of RhpA significantly increases the activity on this substrate. Stimulates ATPase activity of RNA helicase RhpA. Involved in stabilization of mRNA but apparently not rRNA. This Helicobacter pylori (strain ATCC 700392 / 26695) (Campylobacter pylori) protein is Ribonuclease J.